Consider the following 360-residue polypeptide: Peptide chain release factor 1 (360 aa).

Residue Gln-237 is modified to N5-methylglutamine.

It belongs to the prokaryotic/mitochondrial release factor family. Post-translationally, methylated by PrmC. Methylation increases the termination efficiency of RF1.

It is found in the cytoplasm. Peptide chain release factor 1 directs the termination of translation in response to the peptide chain termination codons UAG and UAA. The protein is Peptide chain release factor 1 of Teredinibacter turnerae (strain ATCC 39867 / T7901).